Consider the following 395-residue polypeptide: Hdr-like menaquinol oxidoreductase integral membrane subunit (395 aa).

10 consecutive transmembrane segments (helical) span residues 15–35, 57–77, 88–108, 126–146, 158–178, 196–216, 231–251, 274–294, 305–325, and 364–384; these read YFAL…AYVL, IPYF…AGVF, IAAY…ALDI, IFSW…IYLL, FMAG…GAIY, FIVC…YFTF, LALI…VEGL, VFWS…IIVL, ITFA…YLII, and IGLI…FALI.

The protein belongs to the NrfD family. In terms of assembly, consists of five subunits: an integral membrane subunit, a cytochrome b-like subunit, a cytochrome c subunit and two iron-sulfur subunits.

The protein localises to the cell membrane. Its function is as follows. Has menaquinol-oxidizing activity. HmeB subunit may function as a menaquinol-oxidizing site. HmeA, HmeB and HmeE subunits may together catalyze electron transfer from menaquinol to cytochrome c. The protein is Hdr-like menaquinol oxidoreductase integral membrane subunit (hmeB) of Archaeoglobus fulgidus (strain ATCC 49558 / DSM 4304 / JCM 9628 / NBRC 100126 / VC-16).